Consider the following 581-residue polypeptide: Aspartate--tRNA ligase (581 aa).

Residue Glu170 coordinates L-aspartate. Residues 194–197 are aspartate; the sequence is QLFK. Residue Arg216 participates in L-aspartate binding. Residues 216–218 and Gln225 contribute to the ATP site; that span reads RDE. Position 440 (His440) interacts with L-aspartate. Residue Glu469 coordinates ATP. Arg476 contacts L-aspartate. Residue 521-524 participates in ATP binding; the sequence is GFDR.

The protein belongs to the class-II aminoacyl-tRNA synthetase family. Type 1 subfamily. As to quaternary structure, homodimer.

It is found in the cytoplasm. It carries out the reaction tRNA(Asp) + L-aspartate + ATP = L-aspartyl-tRNA(Asp) + AMP + diphosphate. In terms of biological role, catalyzes the attachment of L-aspartate to tRNA(Asp) in a two-step reaction: L-aspartate is first activated by ATP to form Asp-AMP and then transferred to the acceptor end of tRNA(Asp). This Thermosipho africanus (strain TCF52B) protein is Aspartate--tRNA ligase.